We begin with the raw amino-acid sequence, 462 residues long: tRNA-2-methylthio-N(6)-dimethylallyladenosine synthase (462 aa).

In terms of domain architecture, MTTase N-terminal spans 18–138 (RKVFVKTYGC…LPNALARVRS (121 aa)). The [4Fe-4S] cluster site is built by Cys27, Cys63, Cys101, Cys179, Cys183, and Cys186. In terms of domain architecture, Radical SAM core spans 165–397 (RKRGVSAFLT…QALLSEQQYA (233 aa)). The TRAM domain occupies 400 to 462 (DSMIGREMDV…TNSLIAQKLA (63 aa)).

The protein belongs to the methylthiotransferase family. MiaB subfamily. In terms of assembly, monomer. [4Fe-4S] cluster serves as cofactor.

Its subcellular location is the cytoplasm. The catalysed reaction is N(6)-dimethylallyladenosine(37) in tRNA + (sulfur carrier)-SH + AH2 + 2 S-adenosyl-L-methionine = 2-methylsulfanyl-N(6)-dimethylallyladenosine(37) in tRNA + (sulfur carrier)-H + 5'-deoxyadenosine + L-methionine + A + S-adenosyl-L-homocysteine + 2 H(+). In terms of biological role, catalyzes the methylthiolation of N6-(dimethylallyl)adenosine (i(6)A), leading to the formation of 2-methylthio-N6-(dimethylallyl)adenosine (ms(2)i(6)A) at position 37 in tRNAs that read codons beginning with uridine. The chain is tRNA-2-methylthio-N(6)-dimethylallyladenosine synthase from Brucella anthropi (strain ATCC 49188 / DSM 6882 / CCUG 24695 / JCM 21032 / LMG 3331 / NBRC 15819 / NCTC 12168 / Alc 37) (Ochrobactrum anthropi).